The chain runs to 271 residues: Ribosomal RNA small subunit methyltransferase J (271 aa).

Residues 116–117, 132–133, 168–169, and Asp190 contribute to the S-adenosyl-L-methionine site; these read RD, ER, and SS.

The protein belongs to the methyltransferase superfamily. RsmJ family.

Its subcellular location is the cytoplasm. The catalysed reaction is guanosine(1516) in 16S rRNA + S-adenosyl-L-methionine = N(2)-methylguanosine(1516) in 16S rRNA + S-adenosyl-L-homocysteine + H(+). Its function is as follows. Specifically methylates the guanosine in position 1516 of 16S rRNA. The sequence is that of Ribosomal RNA small subunit methyltransferase J from Shewanella piezotolerans (strain WP3 / JCM 13877).